The primary structure comprises 206 residues: Small ribosomal subunit protein uS4 (206 aa).

The S4 RNA-binding domain maps to 96 to 156 (QRLDNVVYRM…EKAKKQARIV (61 aa)).

This sequence belongs to the universal ribosomal protein uS4 family. As to quaternary structure, part of the 30S ribosomal subunit. Contacts protein S5. The interaction surface between S4 and S5 is involved in control of translational fidelity.

Its function is as follows. One of the primary rRNA binding proteins, it binds directly to 16S rRNA where it nucleates assembly of the body of the 30S subunit. In terms of biological role, with S5 and S12 plays an important role in translational accuracy. The chain is Small ribosomal subunit protein uS4 from Alteromonas mediterranea (strain DSM 17117 / CIP 110805 / LMG 28347 / Deep ecotype).